A 44-amino-acid polypeptide reads, in one-letter code: MGNPKKNSKDFVPNHIGTQSKKAGGNKGKQMQDTTGKQPIVDNG.

Residues 1–44 form a disordered region; the sequence is MGNPKKNSKDFVPNHIGTQSKKAGGNKGKQMQDTTGKQPIVDNG.

Belongs to the SspN family.

Its subcellular location is the spore core. The protein is Small, acid-soluble spore protein N of Bacillus cytotoxicus (strain DSM 22905 / CIP 110041 / 391-98 / NVH 391-98).